Reading from the N-terminus, the 316-residue chain is Myb-related protein 306 (316 aa).

HTH myb-type domains lie at 9-65 (KIGV…RPGI) and 66-116 (KRGD…KKKL). 2 consecutive DNA-binding regions (H-T-H motif) follow at residues 37 to 61 (WRAI…TNYL) and 89 to 112 (WAAI…NTHL). Disordered regions lie at residues 119–144 (LQSP…SKGQ), 168–193 (KTSS…QAST), and 209–230 (KKSP…TTTS). Residues 135 to 144 (DSDKSVSKGQ) show a composition bias toward basic and acidic residues. Positions 181 to 193 (VQTTQPRPFQAST) are enriched in polar residues. Low complexity predominate over residues 216 to 230 (SSTSQAGSSESTTTS).

Expressed in flowers, leaves and weakly in seed pods.

Its subcellular location is the nucleus. Its function is as follows. Transcription factor. This is Myb-related protein 306 from Antirrhinum majus (Garden snapdragon).